We begin with the raw amino-acid sequence, 111 residues long: Large ribosomal subunit protein uL24 (111 aa).

The segment at 85-111 (NTNDPRRKDIINRKASRQKEEQGGKAQ) is disordered. The segment covering 88–111 (DPRRKDIINRKASRQKEEQGGKAQ) has biased composition (basic and acidic residues).

The protein belongs to the universal ribosomal protein uL24 family. Part of the 50S ribosomal subunit.

One of two assembly initiator proteins, it binds directly to the 5'-end of the 23S rRNA, where it nucleates assembly of the 50S subunit. Functionally, located at the polypeptide exit tunnel on the outside of the subunit. The sequence is that of Large ribosomal subunit protein uL24 from Metallosphaera sedula (strain ATCC 51363 / DSM 5348 / JCM 9185 / NBRC 15509 / TH2).